The following is a 399-amino-acid chain: Large envelope protein (399 aa).

M1 carries the post-translational modification N-acetylmethionine. G2 is lipidated: N-myristoyl glycine; by host. The pre-S1 stretch occupies residues 2-118 (GLSWTVPLEW…PPLRDTHPQA (117 aa)). The pre-S stretch occupies residues 2–173 (GLSWTVPLEW…FSRIGDPAPN (172 aa)). At 2–180 (GLSWTVPLEW…APNMESITSG (179 aa)) the chain is on the virion surface; in external conformation side. Topologically, residues 2–252 (GLSWTVPLEW…PGYRWMCLRR (251 aa)) are intravirion; in internal conformation. S4 carries N-linked (GlcNAc...) asparagine glycosylation. Positions 85 to 110 (KTLPADPPPASTNRQSGRQPTPITPP) are disordered. Residues 95–105 (STNRQSGRQPT) show a composition bias toward polar residues. The segment at 119–173 (MQWNSTTFHQALQDPRVRGLYFPAGGSSSGTVNPVPTTASLISSIFSRIGDPAPN) is pre-S2. A helical membrane pass occupies residues 181–201 (FLGPLLVLQAGFFLLTKILTI). The Intravirion; in external conformation segment spans residues 202–252 (PQSLDSWWTSLNFLGGAPVCLGQNSQSPTSNHSPTSCPPICPGYRWMCLRR). The chain crosses the membrane as a helical span at residues 253 to 273 (FIIFLFILLLCLIFLLVLLDY). The Virion surface portion of the chain corresponds to 274-347 (QGMLPVCPLI…WASARFSWLS (74 aa)). N319 is a glycosylation site (N-linked (GlcNAc...) asparagine; by host). The chain crosses the membrane as a helical span at residues 348-368 (LLVPFVQWFAGLSPTVWLSVI). At 369–374 (WMMWYW) the chain is on the intravirion side. The helical transmembrane segment at 375-397 (GPSLYDILSPFIPLLPIFFCLWV) threads the bilayer. Over 398–399 (YI) the chain is Virion surface.

The protein belongs to the orthohepadnavirus major surface antigen family. In terms of assembly, in its internal form (Li-HBsAg), interacts with the capsid protein and with the isoform S. Interacts with host chaperone CANX. Associates with host chaperone CANX through its pre-S2 N glycan; this association may be essential for isoform M proper secretion. As to quaternary structure, interacts with isoform L. Interacts with the antigens of satellite virus HDV (HDVAgs); this interaction is required for encapsidation of HDV genomic RNA. Post-translationally, isoform M is N-terminally acetylated by host at a ratio of 90%, and N-glycosylated by host at the pre-S2 region. In terms of processing, myristoylated.

It localises to the virion membrane. Functionally, the large envelope protein exists in two topological conformations, one which is termed 'external' or Le-HBsAg and the other 'internal' or Li-HBsAg. In its external conformation the protein attaches the virus to cell receptors and thereby initiating infection. This interaction determines the species specificity and liver tropism. This attachment induces virion internalization predominantly through caveolin-mediated endocytosis. The large envelope protein also assures fusion between virion membrane and endosomal membrane. In its internal conformation the protein plays a role in virion morphogenesis and mediates the contact with the nucleocapsid like a matrix protein. In terms of biological role, the middle envelope protein plays an important role in the budding of the virion. It is involved in the induction of budding in a nucleocapsid independent way. In this process the majority of envelope proteins bud to form subviral lipoprotein particles of 22 nm of diameter that do not contain a nucleocapsid. In Homo sapiens (Human), this protein is Large envelope protein.